The sequence spans 286 residues: UDP-3-O-acyl-N-acetylglucosamine deacetylase (286 aa).

The Zn(2+) site is built by His-79, His-237, and Asp-241. His-264 functions as the Proton donor in the catalytic mechanism.

It belongs to the LpxC family. It depends on Zn(2+) as a cofactor.

The catalysed reaction is a UDP-3-O-[(3R)-3-hydroxyacyl]-N-acetyl-alpha-D-glucosamine + H2O = a UDP-3-O-[(3R)-3-hydroxyacyl]-alpha-D-glucosamine + acetate. It functions in the pathway glycolipid biosynthesis; lipid IV(A) biosynthesis; lipid IV(A) from (3R)-3-hydroxytetradecanoyl-[acyl-carrier-protein] and UDP-N-acetyl-alpha-D-glucosamine: step 2/6. Catalyzes the hydrolysis of UDP-3-O-myristoyl-N-acetylglucosamine to form UDP-3-O-myristoylglucosamine and acetate, the committed step in lipid A biosynthesis. This chain is UDP-3-O-acyl-N-acetylglucosamine deacetylase, found in Brucella melitensis biotype 2 (strain ATCC 23457).